The following is a 475-amino-acid chain: Histidine--tRNA ligase (475 aa).

The protein belongs to the class-II aminoacyl-tRNA synthetase family. Homodimer.

Its subcellular location is the cytoplasm. The catalysed reaction is tRNA(His) + L-histidine + ATP = L-histidyl-tRNA(His) + AMP + diphosphate + H(+). This Flavobacterium johnsoniae (strain ATCC 17061 / DSM 2064 / JCM 8514 / BCRC 14874 / CCUG 350202 / NBRC 14942 / NCIMB 11054 / UW101) (Cytophaga johnsonae) protein is Histidine--tRNA ligase.